Reading from the N-terminus, the 236-residue chain is 2-C-methyl-D-erythritol 4-phosphate cytidylyltransferase (236 aa).

The protein belongs to the IspD/TarI cytidylyltransferase family. IspD subfamily. Homodimer.

The catalysed reaction is 2-C-methyl-D-erythritol 4-phosphate + CTP + H(+) = 4-CDP-2-C-methyl-D-erythritol + diphosphate. It functions in the pathway isoprenoid biosynthesis; isopentenyl diphosphate biosynthesis via DXP pathway; isopentenyl diphosphate from 1-deoxy-D-xylulose 5-phosphate: step 2/6. Functionally, catalyzes the formation of 4-diphosphocytidyl-2-C-methyl-D-erythritol from CTP and 2-C-methyl-D-erythritol 4-phosphate (MEP). This is 2-C-methyl-D-erythritol 4-phosphate cytidylyltransferase from Salmonella arizonae (strain ATCC BAA-731 / CDC346-86 / RSK2980).